Reading from the N-terminus, the 635-residue chain is Transcription termination factor FttA (635 aa).

KHa stretches follow at residues 1 to 69 (MSAE…PSVL) and 4 to 69 (EDIL…PSVL). Residues 70-137 (VEPDIAKDKI…WAPKPVRTPP (68 aa)) are KHb. Metallo-beta-lactamase N-terminus stretches follow at residues 179-382 (WVRT…YGGY) and 179-383 (WVRT…GGYD). Beta-Casp stretches follow at residues 180–577 (VRTS…GFSG) and 383–576 (DDVL…EGFS). Residues His-241, His-243, Asp-245, His-246, His-328, and Asp-351 each coordinate Zn(2+). Metallo-beta-lactamase C-terminus stretches follow at residues 577 to 635 (GHSD…IRLR) and 578 to 635 (HSDR…IRLR). His-602 is a binding site for Zn(2+).

It belongs to the metallo-beta-lactamase superfamily. RNA-metabolizing metallo-beta-lactamase-like family. FttA subfamily. In terms of assembly, homodimer. Interacts with RNA polymerase (RNAP); interaction is not dependent on DNA or RNA. Interacts with the Spt4-Spt5 complex. Requires Zn(2+) as cofactor.

The protein localises to the chromosome. In terms of biological role, terminates transcription on the whole genome. Termination is linked to FttA-mediated RNA cleavage and does not require NTP hydrolysis. Cleaves endonucleolytically at the RNA exit channel of RNA polymerase (RNAP); the 5'-3' exonuclease activity of this protein degrades the nascent RNA released from RNAP. Its function is as follows. Terminates transcription genome-wide. Transcription termination is most effective in vivo on RNAs with more than one U4-tract in their 3'-ends (including non-protein coding RNAs); U4-tracts are recognized by this protein. Also plays a role in termination of RNAs without U-tracts by an unknown mechanism. Has endonuclease activity after U-rich tracts in transcription termination sites. Binds RNA at U4-tracts found directly upstream of the experimentally determined transcription termination sites; binds preferentially to RNAs with more U4-tracts at their 3'-ends. This is Transcription termination factor FttA from Methanococcus maripaludis (strain DSM 14266 / JCM 13030 / NBRC 101832 / S2 / LL).